The primary structure comprises 404 residues: Snake venom metalloproteinase H5 (404 aa).

The first 6 residues, 1–6 (FPYQGS), serve as a signal peptide directing secretion. Positions 7 to 177 (SIMLESGKVN…KPSWVNLTPK (171 aa)) are excised as a propeptide. Residues 184-379 (TSVNLQLVVD…KKPKCIHKKS (196 aa)) form the Peptidase M12B domain. 3 disulfides stabilise this stretch: C295/C374, C336/C358, and C338/C341. H320 contacts Zn(2+). E321 is a catalytic residue. The Zn(2+) site is built by H324 and H330. Residues 379-404 (SLKTDTVSTSVSGNEPLDDNVDGFHA) constitute a propeptide that is removed on maturation. Residues 385–404 (VSTSVSGNEPLDDNVDGFHA) are disordered. Over residues 394 to 404 (PLDDNVDGFHA) the composition is skewed to acidic residues.

Monomer. The cofactor is Zn(2+). Expressed by the venom gland.

It localises to the secreted. In terms of biological role, this probable venom zinc protease is not hemorrhagic when 3 ug are injected onto the back skin of guinea pig. The protein is Snake venom metalloproteinase H5 of Deinagkistrodon acutus (Hundred-pace snake).